We begin with the raw amino-acid sequence, 792 residues long: Phenylalanine--tRNA ligase beta subunit (792 aa).

The tRNA-binding domain maps to 39-154; that stretch reads LYSFASVITA…EATPLGEDLA (116 aa). In terms of domain architecture, B5 spans 403–480; the sequence is RELKEVALRP…ESWNIETQNP (78 aa). Asp-456, Asp-462, Glu-465, and Glu-466 together coordinate Mg(2+). An FDX-ACB domain is found at 695-791; the sequence is AIYPSSFRDL…LLTDTKGTIN (97 aa).

Belongs to the phenylalanyl-tRNA synthetase beta subunit family. Type 1 subfamily. Tetramer of two alpha and two beta subunits. Requires Mg(2+) as cofactor.

It localises to the cytoplasm. The enzyme catalyses tRNA(Phe) + L-phenylalanine + ATP = L-phenylalanyl-tRNA(Phe) + AMP + diphosphate + H(+). The polypeptide is Phenylalanine--tRNA ligase beta subunit (pheT) (Chlamydia pneumoniae (Chlamydophila pneumoniae)).